The chain runs to 420 residues: MNIIDELSWRGLINQSTDLEALREEASTPITLYCGFDPTGPSLHAGHLVPLLMLRRFQQAGHNPIVLAGGATGMIGDPRDVGERTMNSADTVSDWAERISGQLSRFVDFDGEHAARLVNNAEWTNEMSVVTFLRDVGKHFSLNTMLARDTVKRRLESDGISYTEFSYMLLQANDYVELNKRFGCTLQVGGGDQWGNIVSGVDLNRRVNGTSVHAVTVPLVTDSDGKKFGKSTGGGSLWLDPEMTSPYAWYQYFINASDADVIRYLRWFTFLTQEELAELEVEVAERPFKREAQRRLAREMTNLVHGTEATEAVELAAQALFGRAELRDLDEKTLAASVSETAVAEIKAGEPRTIIDLLVASGLADSKGAAKRAVKEGGAYVNNERIESDDWEPFAEDLLHGSWLVLRRGKKNFAGVQILG.

An L-tyrosine-binding site is contributed by Y33. Residues 38–47 (PTGPSLHAGH) carry the 'HIGH' region motif. Y167 and Q171 together coordinate L-tyrosine. A 'KMSKS' region motif is present at residues 227 to 231 (KFGKS). Residue K230 participates in ATP binding. Residues 352 to 418 (RTIIDLLVAS…GKKNFAGVQI (67 aa)) enclose the S4 RNA-binding domain.

Belongs to the class-I aminoacyl-tRNA synthetase family. TyrS type 1 subfamily. Homodimer.

It localises to the cytoplasm. The enzyme catalyses tRNA(Tyr) + L-tyrosine + ATP = L-tyrosyl-tRNA(Tyr) + AMP + diphosphate + H(+). In terms of biological role, catalyzes the attachment of tyrosine to tRNA(Tyr) in a two-step reaction: tyrosine is first activated by ATP to form Tyr-AMP and then transferred to the acceptor end of tRNA(Tyr). In Corynebacterium glutamicum (strain ATCC 13032 / DSM 20300 / JCM 1318 / BCRC 11384 / CCUG 27702 / LMG 3730 / NBRC 12168 / NCIMB 10025 / NRRL B-2784 / 534), this protein is Tyrosine--tRNA ligase.